The following is a 1264-amino-acid chain: Valine--tRNA ligase (1264 aa).

At S2 the chain carries N-acetylserine. The 131-residue stretch at 89–219 (GSRAAVLVQQ…YSGARPLSHQ (131 aa)) folds into the GST C-terminal domain. The tract at residues 217 to 296 (SHQPGPEAPA…GEKKDVSGPM (80 aa)) is disordered. Basic and acidic residues-rich tracts occupy residues 234–248 (LKKEAKKREKLEKFQ) and 261–275 (GEKKPKPEKREKRDP). Positions 344-354 (PNVTGSLHLGH) match the 'HIGH' region motif. Phosphoserine is present on residues S437 and S527. K645 carries the post-translational modification N6-acetyllysine. The 'KMSKS' region motif lies at 862–866 (KMSKS). K865 is a binding site for ATP.

It belongs to the class-I aminoacyl-tRNA synthetase family. As to quaternary structure, forms high-molecular-mass aggregates with elongation factor 1.

It carries out the reaction tRNA(Val) + L-valine + ATP = L-valyl-tRNA(Val) + AMP + diphosphate. With respect to regulation, can be regulated by protein kinase C-dependent phosphorylation. In terms of biological role, catalyzes the attachment of valine to tRNA(Val). This chain is Valine--tRNA ligase, found in Homo sapiens (Human).